A 420-amino-acid chain; its full sequence is Tryptophan synthase beta chain (420 aa).

Lys99 carries the post-translational modification N6-(pyridoxal phosphate)lysine.

It belongs to the TrpB family. As to quaternary structure, tetramer of two alpha and two beta chains. Pyridoxal 5'-phosphate serves as cofactor.

It catalyses the reaction (1S,2R)-1-C-(indol-3-yl)glycerol 3-phosphate + L-serine = D-glyceraldehyde 3-phosphate + L-tryptophan + H2O. The protein operates within amino-acid biosynthesis; L-tryptophan biosynthesis; L-tryptophan from chorismate: step 5/5. The beta subunit is responsible for the synthesis of L-tryptophan from indole and L-serine. The protein is Tryptophan synthase beta chain of Helicobacter hepaticus (strain ATCC 51449 / 3B1).